We begin with the raw amino-acid sequence, 292 residues long: Nitrogenase iron protein (292 aa).

Residue 10 to 17 (GKGGIGKS) participates in ATP binding. Residue Cys-98 coordinates [4Fe-4S] cluster. Arg-101 bears the ADP-ribosylarginine; by dinitrogenase reductase ADP-ribosyltransferase mark. [4Fe-4S] cluster is bound at residue Cys-133.

It belongs to the NifH/BchL/ChlL family. Homodimer. The cofactor is [4Fe-4S] cluster. The reversible ADP-ribosylation of Arg-101 inactivates the nitrogenase reductase and regulates nitrogenase activity.

The enzyme catalyses N2 + 8 reduced [2Fe-2S]-[ferredoxin] + 16 ATP + 16 H2O = H2 + 8 oxidized [2Fe-2S]-[ferredoxin] + 2 NH4(+) + 16 ADP + 16 phosphate + 6 H(+). The key enzymatic reactions in nitrogen fixation are catalyzed by the nitrogenase complex, which has 2 components: the iron protein and the molybdenum-iron protein. This chain is Nitrogenase iron protein, found in Teredinibacter turnerae (strain ATCC 39867 / T7901).